Here is a 489-residue protein sequence, read N- to C-terminus: Neuropeptide CCHamide-2 receptor (489 aa).

Residues 1-74 (MYASLMDVGQ…DRPETYIVTV (74 aa)) lie on the Extracellular side of the membrane. N-linked (GlcNAc...) asparagine glycosylation is found at Asn-25 and Asn-50. Residues 75 to 95 (LYTLIFIVGVLGNGTLVIIFF) form a helical membrane-spanning segment. Topologically, residues 96–107 (RHRSMRNIPNTY) are cytoplasmic. Residues 108–128 (ILSLALADLLVILVCVPVATI) form a helical membrane-spanning segment. Residues 129–143 (VYTQESWPFERNMCR) are Extracellular-facing. A disulfide bridge connects residues Cys-142 and Cys-225. Residues 144–164 (ISEFFKDISIGVSVFTLTALS) form a helical membrane-spanning segment. The Cytoplasmic segment spans residues 165-184 (GERYCAIVNPLRKLQTKPLT). The chain crosses the membrane as a helical span at residues 185 to 205 (VFTAVMIWILAILLGMPSVLF). At 206-235 (SDIKSYPVFTATGNMTIEVCSPFRDPEYAK) the chain is on the extracellular side. N-linked (GlcNAc...) asparagine glycosylation occurs at Asn-219. The helical transmembrane segment at 236-256 (FMVAGKALVYYLLPLSIIGAL) threads the bilayer. At 257–293 (YIMMAKRLHMSARNMPGEQQSMQSRTQARARLHVARM) the chain is on the cytoplasmic side. A helical membrane pass occupies residues 294-314 (VVAFVVVFFICFFPYHVFELW). The Extracellular segment spans residues 315–333 (YHFYPTAEEDFDEFWNVLR). A helical transmembrane segment spans residues 334-354 (IVGFCTSFLNSCVNPVALYCV). Topologically, residues 355–489 (SGVFRQHFNR…NRYESGVMRY (135 aa)) are cytoplasmic. The tract at residues 438–468 (SFHRQDSMPLQHGNAHGGGAGGGSSGLGAGG) is disordered. A compositionally biased stretch (gly residues) spans 452–468 (AHGGGAGGGSSGLGAGG).

Belongs to the G-protein coupled receptor 1 family. In terms of tissue distribution, highly expressed in larval brain. Also highly expressed in adult brain with very low levels in larval and adult gut.

The protein localises to the cell membrane. Receptor for the neuropeptide CCHamide-2. This Drosophila melanogaster (Fruit fly) protein is Neuropeptide CCHamide-2 receptor.